A 286-amino-acid chain; its full sequence is UDP-3-O-acyl-N-acetylglucosamine deacetylase (286 aa).

Zn(2+)-binding residues include His-79, His-237, and Asp-241. His-264 serves as the catalytic Proton donor.

Belongs to the LpxC family. It depends on Zn(2+) as a cofactor.

The enzyme catalyses a UDP-3-O-[(3R)-3-hydroxyacyl]-N-acetyl-alpha-D-glucosamine + H2O = a UDP-3-O-[(3R)-3-hydroxyacyl]-alpha-D-glucosamine + acetate. Its pathway is glycolipid biosynthesis; lipid IV(A) biosynthesis; lipid IV(A) from (3R)-3-hydroxytetradecanoyl-[acyl-carrier-protein] and UDP-N-acetyl-alpha-D-glucosamine: step 2/6. Functionally, catalyzes the hydrolysis of UDP-3-O-myristoyl-N-acetylglucosamine to form UDP-3-O-myristoylglucosamine and acetate, the committed step in lipid A biosynthesis. This is UDP-3-O-acyl-N-acetylglucosamine deacetylase from Chlamydia trachomatis serovar L2 (strain ATCC VR-902B / DSM 19102 / 434/Bu).